Reading from the N-terminus, the 382-residue chain is Protein shisa-9A (382 aa).

Residues 1 to 26 form the signal peptide; it reads MKWTVLLLEYFLVKVLVLLYSADGEA. Over 27 to 132 the chain is Extracellular; the sequence is QQLEGFIMLS…DPRHDPTKDK (106 aa). Residue Asn-39 is glycosylated (N-linked (GlcNAc...) asparagine). A helical transmembrane segment spans residues 133-153; the sequence is TNLIVYIICGVVAIMALVGIF. Topologically, residues 154–382 are cytoplasmic; sequence TKLGLEKAHR…VTNSKAEVTV (229 aa).

It belongs to the shisa family. SHISA9 subfamily. As to quaternary structure, component of some AMPA receptors (ionotropic glutamate receptors) complex.

Its subcellular location is the cell projection. It is found in the dendritic spine membrane. The protein resides in the synapse. Its function is as follows. Regulator of short-term neuronal synaptic plasticity in the dentate gyrus. Associates with AMPA receptors (ionotropic glutamate receptors) in synaptic spines and promotes AMPA receptor desensitization at excitatory synapses. The protein is Protein shisa-9A (shisa9a) of Danio rerio (Zebrafish).